A 330-amino-acid chain; its full sequence is Glycerol-3-phosphate dehydrogenase [NAD(P)+] (330 aa).

Residues serine 11, phenylalanine 12, arginine 32, and lysine 106 each coordinate NADPH. Positions 106, 133, and 135 each coordinate sn-glycerol 3-phosphate. Alanine 137 provides a ligand contact to NADPH. Residues lysine 188, aspartate 241, serine 251, arginine 252, and asparagine 253 each contribute to the sn-glycerol 3-phosphate site. Lysine 188 functions as the Proton acceptor in the catalytic mechanism. Residue arginine 252 coordinates NADPH. 2 residues coordinate NADPH: valine 276 and glutamate 278.

This sequence belongs to the NAD-dependent glycerol-3-phosphate dehydrogenase family.

The protein localises to the cytoplasm. It catalyses the reaction sn-glycerol 3-phosphate + NAD(+) = dihydroxyacetone phosphate + NADH + H(+). The enzyme catalyses sn-glycerol 3-phosphate + NADP(+) = dihydroxyacetone phosphate + NADPH + H(+). It participates in membrane lipid metabolism; glycerophospholipid metabolism. Its function is as follows. Catalyzes the reduction of the glycolytic intermediate dihydroxyacetone phosphate (DHAP) to sn-glycerol 3-phosphate (G3P), the key precursor for phospholipid synthesis. In Clostridium botulinum (strain Alaska E43 / Type E3), this protein is Glycerol-3-phosphate dehydrogenase [NAD(P)+].